The following is a 277-amino-acid chain: Antigen 1 (277 aa).

The signal sequence occupies residues 1-16; it reads MQLLALTLALCASIAA. 4 N-linked (GlcNAc...) asparagine glycosylation sites follow: asparagine 41, asparagine 71, asparagine 127, and asparagine 200. The disordered stretch occupies residues 230-277; the sequence is CVGGEEENDGQGEEQTEEPAQDDQQDEAAEEEIPENCHTHEGGELHCT. A compositionally biased stretch (acidic residues) spans 233 to 263; sequence GEEENDGQGEEQTEEPAQDDQQDEAAEEEIP. A compositionally biased stretch (basic and acidic residues) spans 264 to 277; sequence ENCHTHEGGELHCT.

Belongs to the ZPS1 family.

The sequence is that of Antigen 1 (aspnd1) from Emericella nidulans (strain FGSC A4 / ATCC 38163 / CBS 112.46 / NRRL 194 / M139) (Aspergillus nidulans).